A 779-amino-acid chain; its full sequence is 3-isopropylmalate dehydratase (779 aa).

[4Fe-4S] cluster-binding residues include C360, C421, and C424. A disordered region spans residues 484 to 518 (QDQSSPKVEVTSEDEKELESAAYDHAEPVQPEDAP). Residue S488 is modified to Phosphoserine. T494 carries the post-translational modification Phosphothreonine. A Phosphoserine modification is found at S495. The segment covering 501–510 (LESAAYDHAE) has biased composition (basic and acidic residues).

Belongs to the aconitase/IPM isomerase family. Monomer. It depends on [4Fe-4S] cluster as a cofactor.

It carries out the reaction (2R,3S)-3-isopropylmalate = (2S)-2-isopropylmalate. It functions in the pathway amino-acid biosynthesis; L-leucine biosynthesis; L-leucine from 3-methyl-2-oxobutanoate: step 2/4. Catalyzes the isomerization between 2-isopropylmalate and 3-isopropylmalate, via the formation of 2-isopropylmaleate. The protein is 3-isopropylmalate dehydratase (LEU1) of Saccharomyces cerevisiae (strain ATCC 204508 / S288c) (Baker's yeast).